The sequence spans 140 residues: Nucleoside diphosphate kinase (140 aa).

6 residues coordinate ATP: Lys-11, Phe-59, Arg-87, Thr-93, Arg-104, and Asn-114. The Pros-phosphohistidine intermediate role is filled by His-117.

It belongs to the NDK family. In terms of assembly, homotetramer. Mg(2+) serves as cofactor.

The protein resides in the cytoplasm. It carries out the reaction a 2'-deoxyribonucleoside 5'-diphosphate + ATP = a 2'-deoxyribonucleoside 5'-triphosphate + ADP. It catalyses the reaction a ribonucleoside 5'-diphosphate + ATP = a ribonucleoside 5'-triphosphate + ADP. In terms of biological role, major role in the synthesis of nucleoside triphosphates other than ATP. The ATP gamma phosphate is transferred to the NDP beta phosphate via a ping-pong mechanism, using a phosphorylated active-site intermediate. The chain is Nucleoside diphosphate kinase from Rickettsia akari (strain Hartford).